Reading from the N-terminus, the 317-residue chain is Endochitinase 3 (317 aa).

Positions 1 to 19 are cleaved as a signal peptide; it reads MFVRNALVVTGLLAALTQA. 3 N-linked (GlcNAc...) asparagine glycosylation sites follow: Asn-25, Asn-49, and Asn-169. A GH18 domain is found at 29–317; sequence HKLTVYWGAE…NYQKEIKANL (289 aa). The Proton donor role is filled by Glu-170. The N-linked (GlcNAc...) asparagine glycan is linked to Asn-245.

It belongs to the glycosyl hydrolase 18 family. Chitinase class III subfamily.

Its subcellular location is the secreted. The enzyme catalyses Random endo-hydrolysis of N-acetyl-beta-D-glucosaminide (1-&gt;4)-beta-linkages in chitin and chitodextrins.. In terms of biological role, secreted chitinase involved in the degradation of chitin, a component of the cell walls of fungi and exoskeletal elements of some animals (including worms and arthropods). Participates in the infection process and directly acts in the penetration process of the host cuticle. Involved in heat-shock adaptation. The chain is Endochitinase 3 (chi3) from Metarhizium robertsii (strain ARSEF 23 / ATCC MYA-3075) (Metarhizium anisopliae (strain ARSEF 23)).